Consider the following 92-residue polypeptide: Small ribosomal subunit protein uS19 (92 aa).

Belongs to the universal ribosomal protein uS19 family. In terms of assembly, part of the 30S ribosomal subunit.

Its function is as follows. Protein S19 forms a complex with S13 that binds strongly to the 16S ribosomal RNA. The chain is Small ribosomal subunit protein uS19 (rpsS) from Bacillus subtilis (strain 168).